The following is a 272-amino-acid chain: U11/U12 small nuclear ribonucleoprotein 35 kDa protein (272 aa).

One can recognise an RRM domain in the interval 51 to 129 (LTLFVSRLSP…REVFVDFELE (79 aa)). Basic and acidic residues-rich tracts occupy residues 146-162 (GKKE…DRPF) and 190-272 (RDRS…EHNR). A disordered region spans residues 146–272 (GKKESGQLRF…RKHRSDEHNR (127 aa)). The stretch at 221–258 (TKDDKEQNAEHTKRERSREQAKNDKDKEKKDSKRERSR) forms a coiled coil.

The protein resides in the nucleus. This Xenopus laevis (African clawed frog) protein is U11/U12 small nuclear ribonucleoprotein 35 kDa protein (snrnp35).